Reading from the N-terminus, the 369-residue chain is Queuine tRNA-ribosyltransferase (369 aa).

Residue Asp90 is the Proton acceptor of the active site. Substrate-binding positions include 90-94 (DSGGF), Asp144, Gln186, and Gly213. Residues 244-250 (GVGKPAD) are RNA binding. Asp263 functions as the Nucleophile in the catalytic mechanism. Positions 301, 303, 306, and 332 each coordinate Zn(2+).

This sequence belongs to the queuine tRNA-ribosyltransferase family. Homodimer. Within each dimer, one monomer is responsible for RNA recognition and catalysis, while the other monomer binds to the replacement base PreQ1. Requires Zn(2+) as cofactor.

It carries out the reaction 7-aminomethyl-7-carbaguanine + guanosine(34) in tRNA = 7-aminomethyl-7-carbaguanosine(34) in tRNA + guanine. It functions in the pathway tRNA modification; tRNA-queuosine biosynthesis. In terms of biological role, catalyzes the base-exchange of a guanine (G) residue with the queuine precursor 7-aminomethyl-7-deazaguanine (PreQ1) at position 34 (anticodon wobble position) in tRNAs with GU(N) anticodons (tRNA-Asp, -Asn, -His and -Tyr). Catalysis occurs through a double-displacement mechanism. The nucleophile active site attacks the C1' of nucleotide 34 to detach the guanine base from the RNA, forming a covalent enzyme-RNA intermediate. The proton acceptor active site deprotonates the incoming PreQ1, allowing a nucleophilic attack on the C1' of the ribose to form the product. After dissociation, two additional enzymatic reactions on the tRNA convert PreQ1 to queuine (Q), resulting in the hypermodified nucleoside queuosine (7-(((4,5-cis-dihydroxy-2-cyclopenten-1-yl)amino)methyl)-7-deazaguanosine). The protein is Queuine tRNA-ribosyltransferase of Dichelobacter nodosus (strain VCS1703A).